Reading from the N-terminus, the 145-residue chain is Probable DNA-directed RNA polymerases I and III subunit RPAC2 (145 aa).

A disordered region spans residues 1-52 (MGKKSEKKVVEETMEVDEQPAVEPEAVPEEEPEVEDEDLNVPKKKKMEILDP). The span at 12 to 39 (ETMEVDEQPAVEPEAVPEEEPEVEDEDL) shows a compositional bias: acidic residues.

This sequence belongs to the archaeal Rpo11/eukaryotic RPB11/RPC19 RNA polymerase subunit family. As to quaternary structure, component of the RNA polymerase I (Pol I) and RNA polymerase III (Pol III) complexes consisting of at least 13 and 17 subunits, respectively.

Its subcellular location is the nucleus. In terms of biological role, DNA-dependent RNA polymerase catalyzes the transcription of DNA into RNA using the four ribonucleoside triphosphates as substrates. Common core component of RNA polymerases I and III which synthesize ribosomal RNA precursors and small RNAs, such as 5S rRNA and tRNAs, respectively. The protein is Probable DNA-directed RNA polymerases I and III subunit RPAC2 (rpac-19) of Caenorhabditis briggsae.